Reading from the N-terminus, the 196-residue chain is MRFTENFERAKKEALMSLEIALRKGEVDEDIIPLLKKINSIENYFTTSSCSGRISVMEMPHFGDKVNAKWLGKWHREVSLYEVLEAIKKHRSGQLWFLVRSPILHVGAKTLEDAVKLVNLAVSCGFKYSNIKSISNKKLIVEIRSTERMDVLLGENGEIFVGEEYLNKIVEIANDQMRRFKEKLKRLESKINALNR.

This sequence belongs to the TYW3 family.

It catalyses the reaction 4-demethyl-7-[(3S)-3-amino-3-carboxypropyl]wyosine(37) in tRNA(Phe) + S-adenosyl-L-methionine = 7-[(3S)-3-amino-3-carboxypropyl]wyosine(37) in tRNA(Phe) + S-adenosyl-L-homocysteine + H(+). S-adenosyl-L-methionine-dependent methyltransferase that acts as a component of the wyosine derivatives biosynthesis pathway. Probably methylates N-4 position of wybutosine-86 to produce wybutosine-72. In Pyrococcus horikoshii (strain ATCC 700860 / DSM 12428 / JCM 9974 / NBRC 100139 / OT-3), this protein is tRNA(Phe) 7-((3-amino-3-carboxypropyl)-4-demethylwyosine(37)-N(4))-methyltransferase 1.